A 371-amino-acid polypeptide reads, in one-letter code: Methionine import ATP-binding protein MetN (371 aa).

Positions 29-270 (IRIEGVRKVY…PRHEVTRRFV (242 aa)) constitute an ABC transporter domain. 67–74 (GRSGAGKS) is a binding site for ATP.

This sequence belongs to the ABC transporter superfamily. Methionine importer (TC 3.A.1.24) family. As to quaternary structure, the complex is composed of two ATP-binding proteins (MetN), two transmembrane proteins (MetI) and a solute-binding protein (MetQ).

It localises to the cell inner membrane. The catalysed reaction is L-methionine(out) + ATP + H2O = L-methionine(in) + ADP + phosphate + H(+). It carries out the reaction D-methionine(out) + ATP + H2O = D-methionine(in) + ADP + phosphate + H(+). Part of the ABC transporter complex MetNIQ involved in methionine import. Responsible for energy coupling to the transport system. In Rhodopseudomonas palustris (strain BisA53), this protein is Methionine import ATP-binding protein MetN.